The following is a 300-amino-acid chain: ClpXP adapter protein SpxH (300 aa).

The protein belongs to the SpxH family. As to quaternary structure, interacts with Spx.

The protein localises to the cytoplasm. Its function is as follows. Adapter protein required for efficient degradation of Spx by ClpXP under non-stress conditions. Interaction with Spx stabilizes Spx and exposes the C-terminus of Spx for recognition and proteolysis by ClpXP. This is ClpXP adapter protein SpxH from Shouchella clausii (strain KSM-K16) (Alkalihalobacillus clausii).